A 338-amino-acid chain; its full sequence is Aspartate carbamoyltransferase catalytic subunit (338 aa).

R59 and T60 together coordinate carbamoyl phosphate. K87 contacts L-aspartate. Positions 109, 142, and 145 each coordinate carbamoyl phosphate. L-aspartate is bound by residues R182 and R253. G294 and P295 together coordinate carbamoyl phosphate.

Belongs to the aspartate/ornithine carbamoyltransferase superfamily. ATCase family. As to quaternary structure, heterododecamer (2C3:3R2) of six catalytic PyrB chains organized as two trimers (C3), and six regulatory PyrI chains organized as three dimers (R2).

The enzyme catalyses carbamoyl phosphate + L-aspartate = N-carbamoyl-L-aspartate + phosphate + H(+). The protein operates within pyrimidine metabolism; UMP biosynthesis via de novo pathway; (S)-dihydroorotate from bicarbonate: step 2/3. Catalyzes the condensation of carbamoyl phosphate and aspartate to form carbamoyl aspartate and inorganic phosphate, the committed step in the de novo pyrimidine nucleotide biosynthesis pathway. The sequence is that of Aspartate carbamoyltransferase catalytic subunit from Prochlorococcus marinus subsp. pastoris (strain CCMP1986 / NIES-2087 / MED4).